The chain runs to 188 residues: FMN-dependent NADPH-azoreductase (188 aa).

The protein belongs to the azoreductase type 2 family. Homotetramer. Requires FMN as cofactor.

Its function is as follows. Catalyzes the reductive cleavage of azo bond in aromatic azo compounds to the corresponding amines. Requires NADPH, but not NADH, as an electron donor for its activity. The protein is FMN-dependent NADPH-azoreductase (azo1) of Staphylococcus saprophyticus subsp. saprophyticus (strain ATCC 15305 / DSM 20229 / NCIMB 8711 / NCTC 7292 / S-41).